The following is a 315-amino-acid chain: Diacylglycerol kinase (315 aa).

The DAGKc domain occupies 1 to 132; sequence MRKRARIIYN…VDIGKMNNRY (132 aa). ATP is bound by residues 10–14, T41, 67–73, and T94; these read NPTSG and GDGTLNE. K213, D216, and Y218 together coordinate Mg(2+). Residue E273 is the Proton acceptor of the active site.

This sequence belongs to the diacylglycerol/lipid kinase family. In terms of assembly, homodimer. It depends on Mg(2+) as a cofactor.

It carries out the reaction a 1,2-diacyl-sn-glycerol + ATP = a 1,2-diacyl-sn-glycero-3-phosphate + ADP + H(+). Catalyzes the phosphorylation of diacylglycerol (DAG) into phosphatidic acid. Is a key enzyme involved in the production of lipoteichoic acid by reintroducing DAG formed from the breakdown of membrane phospholipids into the phosphatidylglycerol biosynthetic pathway. The protein is Diacylglycerol kinase (dagK) of Staphylococcus aureus (strain bovine RF122 / ET3-1).